We begin with the raw amino-acid sequence, 1509 residues long: Dynein axonemal assembly factor 1 homolog (1509 aa).

6 LRR repeats span residues 34-56 (RLND…EEYT), 57-78 (ELKC…EKLS), 79-100 (KLKC…EPCR), 101-122 (ELDT…GTNI), 125-146 (VLNT…SDLV), and 150-171 (TLSV…KIFE). The 39-residue stretch at 185 to 223 (PVVSRLPQYRKTLILACKELTYLDSRPVFPRDRACAEAW) folds into the LRRCT domain. Disordered stretches follow at residues 252-280 (CTIR…DDTC), 306-327 (HPTS…ATSS), 962-1008 (SGDL…DSKN), and 1103-1122 (TLQT…KLRN). Residues 309–318 (SESGASTSSS) are compositionally biased toward low complexity. Over residues 978-990 (SESEDYDTADDEY) the composition is skewed to acidic residues. Polar residues predominate over residues 1103-1112 (TLQTSFSTVG).

The protein belongs to the DNAAF1 family.

The protein resides in the cell projection. It is found in the cilium. Cilium-specific protein required for cilia structures. This Drosophila yakuba (Fruit fly) protein is Dynein axonemal assembly factor 1 homolog (dtr).